Reading from the N-terminus, the 473-residue chain is 3-isopropylmalate dehydratase large subunit (473 aa).

Positions 348, 408, and 411 each coordinate [4Fe-4S] cluster.

This sequence belongs to the aconitase/IPM isomerase family. LeuC type 1 subfamily. Heterodimer of LeuC and LeuD. [4Fe-4S] cluster is required as a cofactor.

It catalyses the reaction (2R,3S)-3-isopropylmalate = (2S)-2-isopropylmalate. It functions in the pathway amino-acid biosynthesis; L-leucine biosynthesis; L-leucine from 3-methyl-2-oxobutanoate: step 2/4. In terms of biological role, catalyzes the isomerization between 2-isopropylmalate and 3-isopropylmalate, via the formation of 2-isopropylmaleate. The sequence is that of 3-isopropylmalate dehydratase large subunit from Haloarcula marismortui (strain ATCC 43049 / DSM 3752 / JCM 8966 / VKM B-1809) (Halobacterium marismortui).